The following is a 673-amino-acid chain: Probable potassium transport system protein Kup 1 (673 aa).

The next 13 helical transmembrane spans lie at 14–34 (GAGFIIAMGIVYGDIGTSPLY), 58–78 (LSLIIWTLTLITTVKYVWIAL), 101–121 (WLIIPAMIGGAALLSDGALTP), 147–167 (LPIVIITLAILAILFLIQRFG), 175–195 (FGPVMFIWFSFFGITGLINLF), 196–216 (GDFSVLQAINPYWAIHLLLSP), 220–240 (AGIFVLGSVFLATTGAEALYS), 252–272 (VSWPFVKVCIILSYCGQAAWL), 294–314 (LIIFSVILATLAAIIASQALI), 345–365 (LYIPAVNLGLWLAASFIVVYF), 374–394 (AYGLAITVTMLMTTILLTVYL), 403–423 (VFVVLFFGAFIFIEGLFFAAS), and 427–447 (FLHGGYVVVILAALILFVMAI).

Belongs to the HAK/KUP transporter (TC 2.A.72) family.

The protein resides in the cell membrane. The catalysed reaction is K(+)(in) + H(+)(in) = K(+)(out) + H(+)(out). Functionally, transport of potassium into the cell. Likely operates as a K(+):H(+) symporter. In Lactococcus lactis subsp. cremoris (strain SK11), this protein is Probable potassium transport system protein Kup 1.